The following is a 345-amino-acid chain: Uroporphyrinogen decarboxylase (345 aa).

Residues 30-34 (RQAGR), Asp-79, Tyr-154, Ser-209, and His-322 contribute to the substrate site.

Belongs to the uroporphyrinogen decarboxylase family. As to quaternary structure, homodimer.

The protein resides in the cytoplasm. It carries out the reaction uroporphyrinogen III + 4 H(+) = coproporphyrinogen III + 4 CO2. Its pathway is porphyrin-containing compound metabolism; protoporphyrin-IX biosynthesis; coproporphyrinogen-III from 5-aminolevulinate: step 4/4. Functionally, catalyzes the decarboxylation of four acetate groups of uroporphyrinogen-III to yield coproporphyrinogen-III. This Nocardioides sp. (strain ATCC BAA-499 / JS614) protein is Uroporphyrinogen decarboxylase.